The following is an 849-amino-acid chain: Probable receptor-like protein kinase At1g30570 (849 aa).

The first 28 residues, 1–28 (MSKLRKKYLEHLLCVLIFFTYVIGYGEA), serve as a signal peptide directing secretion. At 29-429 (QSKSFLVDCG…GHSVSDSKMR (401 aa)) the chain is on the extracellular side. N-linked (GlcNAc...) asparagine glycans are attached at residues Asn-40, Asn-57, Asn-94, Asn-122, Asn-158, Asn-268, Asn-271, Asn-305, and Asn-343. A helical membrane pass occupies residues 430–450 (IIWISVGAGIAIIIFFVFLGI). Over 451 to 849 (LVVCLCKKRR…QTGSALHNSA (399 aa)) the chain is Cytoplasmic. Residues 520-793 (FDDGLAIGVG…GEVLWSLEYV (274 aa)) enclose the Protein kinase domain. Residues 526–534 (IGVGGFGKV) and Lys-548 contribute to the ATP site. The active-site Proton acceptor is Asp-644. A disordered region spans residues 810–849 (FSSSQAVEEAPESFTLPACSNQDSSETEQSQTGSALHNSA). The segment covering 827–849 (ACSNQDSSETEQSQTGSALHNSA) has biased composition (polar residues).

Belongs to the protein kinase superfamily. Ser/Thr protein kinase family.

It localises to the cell membrane. The protein is Probable receptor-like protein kinase At1g30570 of Arabidopsis thaliana (Mouse-ear cress).